A 624-amino-acid polypeptide reads, in one-letter code: DNA mismatch repair protein MutL (624 aa).

Positions 355-377 are disordered; that stretch reads EESAPERKLPEKTPEPSYSPMKL. Residues 358 to 368 show a composition bias toward basic and acidic residues; that stretch reads APERKLPEKTP.

It belongs to the DNA mismatch repair MutL/HexB family.

This protein is involved in the repair of mismatches in DNA. It is required for dam-dependent methyl-directed DNA mismatch repair. May act as a 'molecular matchmaker', a protein that promotes the formation of a stable complex between two or more DNA-binding proteins in an ATP-dependent manner without itself being part of a final effector complex. In Bacillus velezensis (strain DSM 23117 / BGSC 10A6 / LMG 26770 / FZB42) (Bacillus amyloliquefaciens subsp. plantarum), this protein is DNA mismatch repair protein MutL.